We begin with the raw amino-acid sequence, 523 residues long: Light-independent protochlorophyllide reductase subunit B (523 aa).

Aspartate 36 contacts [4Fe-4S] cluster. Catalysis depends on aspartate 290, which acts as the Proton donor. 425–426 (GL) is a binding site for substrate.

This sequence belongs to the ChlB/BchB/BchZ family. In terms of assembly, protochlorophyllide reductase is composed of three subunits; ChlL, ChlN and ChlB. Forms a heterotetramer of two ChlB and two ChlN subunits. The cofactor is [4Fe-4S] cluster.

It carries out the reaction chlorophyllide a + oxidized 2[4Fe-4S]-[ferredoxin] + 2 ADP + 2 phosphate = protochlorophyllide a + reduced 2[4Fe-4S]-[ferredoxin] + 2 ATP + 2 H2O. It participates in porphyrin-containing compound metabolism; chlorophyll biosynthesis (light-independent). Component of the dark-operative protochlorophyllide reductase (DPOR) that uses Mg-ATP and reduced ferredoxin to reduce ring D of protochlorophyllide (Pchlide) to form chlorophyllide a (Chlide). This reaction is light-independent. The NB-protein (ChlN-ChlB) is the catalytic component of the complex. The sequence is that of Light-independent protochlorophyllide reductase subunit B from Prochlorococcus marinus (strain MIT 9215).